The following is a 424-amino-acid chain: MDSSLAISGGPRLSNREWPRWPQPGDRALKSLEDVLTSGRWTISCAYQGRDSYERQFASAFADYCGSAMCVPISTGTASLAIALEACGVGAGDEVIVPGLSWVASASAVLGINAVPVLVDVDPATYCLDPAATEAAITERTRAITVVHAYSAVADLDALLDIARRHGLPLIEDCAHAHGAGFRGRPVGAHGAAGVFSMQGSKLLTCGEGGALVTDDADVALRAEHLRADGRVVRREPVGVGEMELEETGRMMGSNACLSEFHAAVLLDQLELLDGQNARRTRAADHLTDRLSELGMTAQATAPGTTARAYYRYLVRLPDEVLAVAPVERFAHALTAELGFAVTQTHRPLNDNPLNRPSSRRRFATDARYLERVDPSRFDLPAAKRAHESVVSFSHEVLLAPLDAIDDIARAFRKVLDNVREVSR.

The tract at residues 1–21 is disordered; that stretch reads MDSSLAISGGPRLSNREWPRW. Lysine 202 carries the post-translational modification N6-(pyridoxal phosphate)lysine.

It belongs to the DegT/DnrJ/EryC1 family. L-glutamine:2-deoxy-scyllo-inosose/scyllo-inosose aminotransferase subfamily. As to quaternary structure, homodimer. Pyridoxal 5'-phosphate is required as a cofactor.

The enzyme catalyses scyllo-inosose + L-glutamine = 1-amino-1-deoxy-scyllo-inositol + 2-oxoglutaramate. The protein operates within antibiotic biosynthesis; streptomycin biosynthesis. Functionally, catalyzes the PLP-dependent transamination of scyllo-inosose to form scyllo-inosamine. The polypeptide is L-glutamine:scyllo-inosose aminotransferase (stsC) (Streptomyces griseus).